We begin with the raw amino-acid sequence, 342 residues long: 4-hydroxy-2-oxovalerate aldolase 2 (342 aa).

The 253-residue stretch at 8–260 (ITVHDMTLRD…ETGVDVFKIQ (253 aa)) folds into the Pyruvate carboxyltransferase domain. Substrate is bound at residue 16-17 (RD). Asp-17 serves as a coordination point for Mn(2+). Residue His-20 is the Proton acceptor of the active site. 2 residues coordinate substrate: Ser-170 and His-199. Positions 199 and 201 each coordinate Mn(2+). Tyr-290 is a binding site for substrate.

The protein belongs to the 4-hydroxy-2-oxovalerate aldolase family.

It carries out the reaction (S)-4-hydroxy-2-oxopentanoate = acetaldehyde + pyruvate. The protein is 4-hydroxy-2-oxovalerate aldolase 2 (mhpE) of Azoarcus sp. (strain BH72).